Reading from the N-terminus, the 353-residue chain is UDP-N-acetylglucosamine--N-acetylmuramyl-(pentapeptide) pyrophosphoryl-undecaprenol N-acetylglucosamine transferase (353 aa).

Residues 10–12, N124, S183, and Q283 contribute to the UDP-N-acetyl-alpha-D-glucosamine site; that span reads TGG.

Belongs to the glycosyltransferase 28 family. MurG subfamily.

Its subcellular location is the cell inner membrane. It catalyses the reaction di-trans,octa-cis-undecaprenyl diphospho-N-acetyl-alpha-D-muramoyl-L-alanyl-D-glutamyl-meso-2,6-diaminopimeloyl-D-alanyl-D-alanine + UDP-N-acetyl-alpha-D-glucosamine = di-trans,octa-cis-undecaprenyl diphospho-[N-acetyl-alpha-D-glucosaminyl-(1-&gt;4)]-N-acetyl-alpha-D-muramoyl-L-alanyl-D-glutamyl-meso-2,6-diaminopimeloyl-D-alanyl-D-alanine + UDP + H(+). Its pathway is cell wall biogenesis; peptidoglycan biosynthesis. In terms of biological role, cell wall formation. Catalyzes the transfer of a GlcNAc subunit on undecaprenyl-pyrophosphoryl-MurNAc-pentapeptide (lipid intermediate I) to form undecaprenyl-pyrophosphoryl-MurNAc-(pentapeptide)GlcNAc (lipid intermediate II). In Helicobacter pylori (strain ATCC 700392 / 26695) (Campylobacter pylori), this protein is UDP-N-acetylglucosamine--N-acetylmuramyl-(pentapeptide) pyrophosphoryl-undecaprenol N-acetylglucosamine transferase.